Reading from the N-terminus, the 372-residue chain is Glutamate 5-kinase (372 aa).

Lysine 14 is an ATP binding site. Residues serine 54, aspartate 141, and asparagine 153 each contribute to the substrate site. ATP contacts are provided by residues 173 to 174 and 215 to 221; these read TD and TGGMATK. Positions 280–358 constitute a PUA domain; the sequence is RGKLILDQGA…DDIESLLGYD (79 aa).

This sequence belongs to the glutamate 5-kinase family.

The protein resides in the cytoplasm. The enzyme catalyses L-glutamate + ATP = L-glutamyl 5-phosphate + ADP. The protein operates within amino-acid biosynthesis; L-proline biosynthesis; L-glutamate 5-semialdehyde from L-glutamate: step 1/2. Functionally, catalyzes the transfer of a phosphate group to glutamate to form L-glutamate 5-phosphate. The chain is Glutamate 5-kinase from Shewanella sediminis (strain HAW-EB3).